The primary structure comprises 466 residues: Cytochrome b561 and DOMON domain-containing protein At3g59070 (466 aa).

A signal peptide spans 1-25 (MSLSSRATLVVLCCLFMLIPSFTTA). A DOMON domain is found at 57–172 (LNSYLHFNYA…TVVNHLWQDG (116 aa)). The Cytochrome b561 domain maps to 179-380 (RLGMHAMSGD…MEILQFKKRW (202 aa)). 3 helical membrane passes run 219–239 (IHAIVNALSWGILMPIGVMAA), 252–272 (WFYIHVVCQTTGYFSGLIGGL), and 287–307 (TLHTVIGLLLFALGFLQILSL). The heme b site is built by H220, H256, H289, and H325. 2 consecutive transmembrane segments (helical) span residues 327 to 347 (TMGYIVIVLSIYNIYKGLSIL) and 355 to 375 (IAYTTIICCIAAFAVVMEILQ).

It depends on heme b as a cofactor.

Its subcellular location is the membrane. May act as a catecholamine-responsive trans-membrane electron transporter. The protein is Cytochrome b561 and DOMON domain-containing protein At3g59070 of Arabidopsis thaliana (Mouse-ear cress).